The following is a 90-amino-acid chain: Progonadoliberin-1 (90 aa).

The N-terminal stretch at 1–24 (MSRHVTVVLLLAIVLLLSSHMIHG) is a signal peptide. Position 25 is a pyrrolidone carboxylic acid (glutamine 25). Glycine 34 carries the glycine amide modification.

Belongs to the GnRH family. In terms of tissue distribution, forebrain.

Its subcellular location is the secreted. Functionally, stimulates the secretion of gonadotropins. In Aquarana catesbeiana (American bullfrog), this protein is Progonadoliberin-1 (gnrh1).